The following is a 343-amino-acid chain: Vancomycin C-type resistance protein VanC1 (343 aa).

Positions 134 to 336 (HQLADTMGIA…YEILVEQLIA (203 aa)) constitute an ATP-grasp domain. 164-219 (IQDHGFPIFIKPNEAGSSKGITKVTDKTALQSALTTAFAYGSTVLIQKAIAGIEIG) is an ATP binding site. Mg(2+)-binding residues include aspartate 290, glutamate 303, and asparagine 305. Mn(2+)-binding residues include aspartate 290, glutamate 303, and asparagine 305.

This sequence belongs to the D-alanine--D-alanine ligase family. It depends on Mg(2+) as a cofactor. Mn(2+) serves as cofactor.

The protein resides in the cell membrane. It carries out the reaction D-serine + D-alanine + ATP = D-alanyl-D-serine + ADP + phosphate + H(+). In terms of biological role, D-alanine--D-alanine ligase of altered specificity, which catalyzes synthesis of D-Ala-D-Ser; produces a peptidoglycan which does not terminate in D-alanine but in D-serine, thus probably reducing affinity for vancomycin. Together with VanT and VanXYC, required for vancomycin resistance in E.gallinarum strain BM4174. The chain is Vancomycin C-type resistance protein VanC1 from Enterococcus gallinarum.